The primary structure comprises 271 residues: Ribosomal RNA small subunit methyltransferase A (271 aa).

S-adenosyl-L-methionine is bound by residues H11, L13, G38, E58, D86, and N101.

Belongs to the class I-like SAM-binding methyltransferase superfamily. rRNA adenine N(6)-methyltransferase family. RsmA subfamily.

Its subcellular location is the cytoplasm. The catalysed reaction is adenosine(1518)/adenosine(1519) in 16S rRNA + 4 S-adenosyl-L-methionine = N(6)-dimethyladenosine(1518)/N(6)-dimethyladenosine(1519) in 16S rRNA + 4 S-adenosyl-L-homocysteine + 4 H(+). Functionally, specifically dimethylates two adjacent adenosines (A1518 and A1519) in the loop of a conserved hairpin near the 3'-end of 16S rRNA in the 30S particle. May play a critical role in biogenesis of 30S subunits. This chain is Ribosomal RNA small subunit methyltransferase A, found in Helicobacter acinonychis (strain Sheeba).